We begin with the raw amino-acid sequence, 450 residues long: Sorting nexin-4 (450 aa).

Residue M1 is modified to N-acetylmethionine. A disordered region spans residues 1-53 (MEQAAPDPERLWQPAPLEPLSHPDAGLESMVGEETKGARDEGPGDGTMTENNF). Positions 33–42 (EETKGARDEG) are enriched in basic and acidic residues. The PX domain maps to 61–187 (SVSEAEKRTG…YLFLTQEGNW (127 aa)). 4 residues coordinate a 1,2-diacyl-sn-glycero-3-phospho-(1D-myo-inositol-3-phosphate): R106, S108, K132, and R154.

It belongs to the sorting nexin family. As to quaternary structure, heterodimer; heterodimerizes with SNX7 or SNX30. Interacts with WWC1/KIBRA. Identified in a complex with WWC1/KIBRA and dynein components DYNLL1 and DYNC1I2. Interacts with BIN1.

The protein resides in the early endosome. The protein localises to the early endosome membrane. Functionally, involved in the regulation of endocytosis and in several stages of intracellular trafficking. Plays a role in recycling endocytosed transferrin receptor and prevent its degradation. Involved in autophagosome assembly by regulating trafficking and recycling of phospholipid scramblase ATG9A. The polypeptide is Sorting nexin-4 (Bos taurus (Bovine)).